Here is a 500-residue protein sequence, read N- to C-terminus: NAD(P)H-quinone oxidoreductase chain 4, chloroplastic (500 aa).

14 helical membrane-spanning segments follow: residues 4–24, 37–57, 84–104, 111–129, 134–154, 167–187, 208–228, 242–262, 272–292, 305–325, 330–350, 374–396, 411–431, and 462–482; these read FPWLTIIVVLPIFAGSSIFFL, ICICLLELLLTTYTFCYHFQL, GLSIGPILLTGFITTLATLAA, SRLFHFLMLAMYSGQIGSF, LLLFFIMWELELIPVYLLLSM, FILYTAGGSIFLLMGIPGMGL, ALEILFYFGFLIAYAVKSPII, HYSTCMLLAGILLKMGAYGLV, AHSIFSPWLMIVGTIQVIYAA, IAYSSVSHMAFIIIGIGSITD, GAILQIISHGFIGAALFFLAG, IFTMFSSFSMASLALPGMSGFVA, FFMPKILITFVMAIGMILTPI, and LFVSICIFLPVIGIGIYPDFV.

Belongs to the complex I subunit 4 family.

The protein resides in the plastid. Its subcellular location is the chloroplast thylakoid membrane. It carries out the reaction a plastoquinone + NADH + (n+1) H(+)(in) = a plastoquinol + NAD(+) + n H(+)(out). The catalysed reaction is a plastoquinone + NADPH + (n+1) H(+)(in) = a plastoquinol + NADP(+) + n H(+)(out). In Chloranthus spicatus (Chulantree), this protein is NAD(P)H-quinone oxidoreductase chain 4, chloroplastic.